A 414-amino-acid polypeptide reads, in one-letter code: tRNA N6-adenosine threonylcarbamoyltransferase, mitochondrial (414 aa).

Residues 1–29 constitute a mitochondrion transit peptide; it reads MLMLSKTAGAIPRPPRSNVRGFIRRFNVQ. N6-acetyllysine is present on residues K74 and K140. Residues H147 and H151 each coordinate a divalent metal cation. Substrate is bound by residues 169 to 173 and D202; that span reads LISGG. K203 bears the N6-acetyllysine mark. 2 residues coordinate substrate: G222 and E226. Residues K230 and K299 each carry the N6-acetyllysine modification. Substrate is bound by residues 329 to 330 and T357; that span reads SN. An a divalent metal cation-binding site is contributed by D358.

This sequence belongs to the KAE1 / TsaD family. In terms of assembly, monomer. The cofactor is a divalent metal cation.

The protein resides in the mitochondrion. The enzyme catalyses L-threonylcarbamoyladenylate + adenosine(37) in tRNA = N(6)-L-threonylcarbamoyladenosine(37) in tRNA + AMP + H(+). Functionally, required for the formation of a threonylcarbamoyl group on adenosine at position 37 (t(6)A37) in mitochondrial tRNAs that read codons beginning with adenine. Probably involved in the transfer of the threonylcarbamoyl moiety of threonylcarbamoyl-AMP (TC-AMP) to the N6 group of A37. Involved in mitochondrial genome maintenance. The sequence is that of tRNA N6-adenosine threonylcarbamoyltransferase, mitochondrial from Rattus norvegicus (Rat).